We begin with the raw amino-acid sequence, 203 residues long: Holliday junction branch migration complex subunit RuvA (203 aa).

Residues 1–64 (MIGRLRGIIL…EDAQLLYGFN (64 aa)) are domain I. Positions 65–142 (NKQERMLFRE…KGLHGDLFTP (78 aa)) are domain II. Residues 143–154 (AADLVLTSPNGP) are flexible linker. The segment at 155–203 (TSDDAEQEAVAALVALGYKPQEASRMVSKIAKPDANSETLIREALRAAL) is domain III.

The protein belongs to the RuvA family. In terms of assembly, homotetramer. Forms an RuvA(8)-RuvB(12)-Holliday junction (HJ) complex. HJ DNA is sandwiched between 2 RuvA tetramers; dsDNA enters through RuvA and exits via RuvB. An RuvB hexamer assembles on each DNA strand where it exits the tetramer. Each RuvB hexamer is contacted by two RuvA subunits (via domain III) on 2 adjacent RuvB subunits; this complex drives branch migration. In the full resolvosome a probable DNA-RuvA(4)-RuvB(12)-RuvC(2) complex forms which resolves the HJ.

It localises to the cytoplasm. Functionally, the RuvA-RuvB-RuvC complex processes Holliday junction (HJ) DNA during genetic recombination and DNA repair, while the RuvA-RuvB complex plays an important role in the rescue of blocked DNA replication forks via replication fork reversal (RFR). RuvA specifically binds to HJ cruciform DNA, conferring on it an open structure. The RuvB hexamer acts as an ATP-dependent pump, pulling dsDNA into and through the RuvAB complex. HJ branch migration allows RuvC to scan DNA until it finds its consensus sequence, where it cleaves and resolves the cruciform DNA. The protein is Holliday junction branch migration complex subunit RuvA of Enterobacter sp. (strain 638).